The chain runs to 204 residues: MQKFTTFTSIAIPLKRANIDTDAIIPKQFLKSIKRSGFGANLFDEWRYLDHGEIGMDNSKRPLNMDFVLNQPKYQNAKILLVLKNFGCGSSREHAPWALKDYGFKTIIAPSFADIFYNNCFKNGILPIVQNNNVMDELFSSTDKITINLDAQSININNKNYPFEIDIERKTHLINGLDDISLTLQYINDIKAFEKHYFNKYDWL.

The protein belongs to the LeuD family. LeuD type 1 subfamily. In terms of assembly, heterodimer of LeuC and LeuD.

The enzyme catalyses (2R,3S)-3-isopropylmalate = (2S)-2-isopropylmalate. Its pathway is amino-acid biosynthesis; L-leucine biosynthesis; L-leucine from 3-methyl-2-oxobutanoate: step 2/4. Catalyzes the isomerization between 2-isopropylmalate and 3-isopropylmalate, via the formation of 2-isopropylmaleate. The chain is 3-isopropylmalate dehydratase small subunit from Vesicomyosocius okutanii subsp. Calyptogena okutanii (strain HA).